A 219-amino-acid polypeptide reads, in one-letter code: Nuclear transcription factor Y subunit B-8 (219 aa).

Positions Met-1 to Asp-26 are disordered. A DNA-binding region spans residues Leu-29–Ser-35. The subunit association domain (SAD) stretch occupies residues Val-56–Ile-67. A compositionally biased stretch (low complexity) spans Ala-119–Thr-134. Disordered regions lie at residues Ala-119–Ala-142 and Gly-166–Ala-219. Gly residues predominate over residues Gly-190–Ser-206.

It belongs to the NFYB/HAP3 subunit family. As to quaternary structure, heterotrimeric transcription factor composed of three components, NF-YA, NF-YB and NF-YC. NF-YB and NF-YC must interact and dimerize for NF-YA association and DNA binding. Interacts with NFYC2, NFYC4 and NFYC6.

It localises to the cytoplasm. Its function is as follows. Component of the NF-Y/HAP transcription factor complex. This Oryza sativa subsp. japonica (Rice) protein is Nuclear transcription factor Y subunit B-8.